Consider the following 844-residue polypeptide: Protein translocase subunit SecA (844 aa).

Residues Q89, 107-111 (GEGKT), and D497 contribute to the ATP site. The Zn(2+) site is built by C829, C831, C840, and H841.

This sequence belongs to the SecA family. In terms of assembly, monomer and homodimer. Part of the essential Sec protein translocation apparatus which comprises SecA, SecYEG and auxiliary proteins SecDF. Other proteins may also be involved. It depends on Zn(2+) as a cofactor.

It is found in the cell membrane. It localises to the cytoplasm. The enzyme catalyses ATP + H2O + cellular proteinSide 1 = ADP + phosphate + cellular proteinSide 2.. Functionally, part of the Sec protein translocase complex. Interacts with the SecYEG preprotein conducting channel. Has a central role in coupling the hydrolysis of ATP to the transfer of proteins into and across the cell membrane, serving as an ATP-driven molecular motor driving the stepwise translocation of polypeptide chains across the membrane. The protein is Protein translocase subunit SecA of Streptococcus suis (strain 98HAH33).